Consider the following 326-residue polypeptide: WRKY transcription factor 8 (326 aa).

Positions 115-172 (VRVSASPSSSEADHHPGEDSGKIRKKREVRDGGEDDQRSQKVVKTKKKEEKKKEPRVS) are disordered. Basic and acidic residues-rich tracts occupy residues 125–153 (EADH…DQRS) and 161–170 (KKEEKKKEPR). A DNA-binding region (WRKY) is located at residues 177 to 242 (TEVDHLEDGY…YESQHNHPIP (66 aa)).

It belongs to the WRKY group II-c family. Interacts with VQ9 (via N-terminus). In terms of tissue distribution, highly expressed in roots and at lower levels in rosette leaves, cauline leaves, stems, flowers and siliques.

The protein localises to the nucleus. In terms of biological role, transcription factor. Interacts specifically with the W box (5'-TTGAC[CT]-3'), a frequently occurring stress-responsive cis-acting element. Functions as a positive regulator of salt stress response. Binds the W box of LTI78/RD29A stress-response gene and directly regulates its transcription under salt stress. Functions antagonistically with VQ9 to regulate sodium and potassium homeostasis under salt stress by regulating the expression of downstream SOS (SALT OVERLY SENSITIVE) stress-responsive genes. The DNA-binding activity of WRKY8 is decreased by VQ9. Functions as a negative regulator of basal resistance to the bacterial pathogen P.syringae and as positive regulator of resistance to the fungal pathogen to B.cinerea. Functions as a positive regulator of defense response againt tobamovirus (TMV) by regulating both the abscisic acid and ethylene signaling pathways. Positively regulates ABI4 expression and negatively modulates ACS6 and ERF104 expression by directly binding to the W box consensus motifs within their promoters. The protein is WRKY transcription factor 8 (WRKY8) of Arabidopsis thaliana (Mouse-ear cress).